We begin with the raw amino-acid sequence, 151 residues long: Putative pre-16S rRNA nuclease (151 aa).

The protein belongs to the YqgF nuclease family.

It is found in the cytoplasm. Could be a nuclease involved in processing of the 5'-end of pre-16S rRNA. This Aster yellows witches'-broom phytoplasma (strain AYWB) protein is Putative pre-16S rRNA nuclease.